The following is a 209-amino-acid chain: Transcription elongation factor A protein-like 4 (209 aa).

Residue Met1 is modified to N-acetylmethionine. A disordered region spans residues 1-125; that stretch reads MEKLYNENEG…VPRKAKRKTN (125 aa). A compositionally biased stretch (basic and acidic residues) spans 25–96; sequence QDERKPEVAC…GSEREGKPES (72 aa). Phosphoserine occurs at positions 88 and 96.

The protein belongs to the TFS-II family. TFA subfamily.

It is found in the nucleus. Functionally, may be involved in transcriptional regulation. In Pongo abelii (Sumatran orangutan), this protein is Transcription elongation factor A protein-like 4 (TCEAL4).